Consider the following 502-residue polypeptide: ATP synthase subunit alpha (502 aa).

169–176 (GDRQTGKT) serves as a coordination point for ATP.

It belongs to the ATPase alpha/beta chains family. In terms of assembly, F-type ATPases have 2 components, CF(1) - the catalytic core - and CF(0) - the membrane proton channel. CF(1) has five subunits: alpha(3), beta(3), gamma(1), delta(1), epsilon(1). CF(0) has three main subunits: a(1), b(2) and c(9-12). The alpha and beta chains form an alternating ring which encloses part of the gamma chain. CF(1) is attached to CF(0) by a central stalk formed by the gamma and epsilon chains, while a peripheral stalk is formed by the delta and b chains.

The protein resides in the cell membrane. It catalyses the reaction ATP + H2O + 4 H(+)(in) = ADP + phosphate + 5 H(+)(out). Its function is as follows. Produces ATP from ADP in the presence of a proton gradient across the membrane. The alpha chain is a regulatory subunit. This Exiguobacterium sibiricum (strain DSM 17290 / CCUG 55495 / CIP 109462 / JCM 13490 / 255-15) protein is ATP synthase subunit alpha.